The following is a 155-amino-acid chain: Small ribosomal subunit protein uS7c (155 aa).

Belongs to the universal ribosomal protein uS7 family. Part of the 30S ribosomal subunit.

The protein resides in the plastid. It localises to the chloroplast. One of the primary rRNA binding proteins, it binds directly to 16S rRNA where it nucleates assembly of the head domain of the 30S subunit. The polypeptide is Small ribosomal subunit protein uS7c (rps7) (Silene latifolia (White campion)).